A 196-amino-acid chain; its full sequence is Dephospho-CoA kinase (196 aa).

The DPCK domain occupies 6–196 (AIALTGGIGT…QVERFLKTLL (191 aa)). 14-19 (GTGKST) is a binding site for ATP.

It belongs to the CoaE family.

It localises to the cytoplasm. The catalysed reaction is 3'-dephospho-CoA + ATP = ADP + CoA + H(+). Its pathway is cofactor biosynthesis; coenzyme A biosynthesis; CoA from (R)-pantothenate: step 5/5. In terms of biological role, catalyzes the phosphorylation of the 3'-hydroxyl group of dephosphocoenzyme A to form coenzyme A. The sequence is that of Dephospho-CoA kinase from Helicobacter pylori (strain J99 / ATCC 700824) (Campylobacter pylori J99).